The chain runs to 259 residues: Short chain dehydrogenase ausX (259 aa).

Residues I13, D59, R121, Y153, K157, and V186 each contribute to the NADP(+) site. Residue Y153 is the Proton acceptor of the active site. Y153 serves as the catalytic Proton donor. K157 acts as the Lowers pKa of active site Tyr in catalysis.

It belongs to the short-chain dehydrogenases/reductases (SDR) family.

It functions in the pathway secondary metabolite biosynthesis; terpenoid biosynthesis. Short chain dehydrogenase; part of the gene cluster A that mediates the biosynthesis of the fungal meroterpenoid acetoxydehydroaustin. The first step of the pathway is the synthesis of 3,5-dimethylorsellinic acid by the polyketide synthase ausA. 3,5-dimethylorsellinic acid is then prenylated by the polyprenyl transferase ausN. Further epoxidation by the FAD-dependent monooxygenase ausM and cyclization by the probable terpene cyclase ausL lead to the formation of protoaustinoid A. Protoaustinoid A is then oxidized to spiro-lactone preaustinoid A3 by the combined action of the FAD-binding monooxygenases ausB and ausC, and the dioxygenase ausE. Acid-catalyzed keto-rearrangement and ring contraction of the tetraketide portion of preaustinoid A3 by ausJ lead to the formation of preaustinoid A4. The aldo-keto reductase ausK, with the help of ausH, is involved in the next step by transforming preaustinoid A4 into isoaustinone which is in turn hydroxylated by the P450 monooxygenase ausI to form austinolide. The cytochrome P450 monooxygenase ausG then modifies austinolide to austinol. Austinol is further acetylated to austin by the O-acetyltransferase ausP, which spontaneously changes to dehydroaustin. The cytochrome P450 monooxygenase then converts dehydroaustin is into 7-dehydrodehydroaustin. The hydroxylation catalyzed by ausR permits the second O-acetyltransferase ausQ to add an additional acetyl group to the molecule, leading to the formation of acetoxydehydroaustin. Due to genetic rearrangements of the clusters and the subsequent loss of some enzymes, the end product of the Penicillium brasilianum austinoid biosynthesis clusters is acetoxydehydroaustin. This Penicillium brasilianum protein is Short chain dehydrogenase ausX.